A 447-amino-acid chain; its full sequence is Cysteine--tRNA ligase (447 aa).

Cys-28 provides a ligand contact to Zn(2+). The short motif at 30–40 (PTVYNYIHIGN) is the 'HIGH' region element. The Zn(2+) site is built by Cys-211, His-236, and Glu-240. A 'KMSKS' region motif is present at residues 268–272 (KMSKS). Lys-271 serves as a coordination point for ATP.

It belongs to the class-I aminoacyl-tRNA synthetase family. In terms of assembly, monomer. It depends on Zn(2+) as a cofactor.

The protein localises to the cytoplasm. It catalyses the reaction tRNA(Cys) + L-cysteine + ATP = L-cysteinyl-tRNA(Cys) + AMP + diphosphate. The protein is Cysteine--tRNA ligase of Streptococcus agalactiae serotype V (strain ATCC BAA-611 / 2603 V/R).